The primary structure comprises 128 residues: U24-ctenitoxin-Pn1a (128 aa).

Thyroglobulin type-1 domains are found at residues 4 to 67 and 72 to 127; these read KSDC…ECGC and KERK…SLKC. 4 cysteine pairs are disulfide-bonded: cysteine 7/cysteine 27, cysteine 38/cysteine 45, cysteine 47/cysteine 67, and cysteine 107/cysteine 127.

As to expression, expressed by the venom gland.

Its subcellular location is the secreted. Its function is as follows. Cysteine proteinase inhibitor. This Phoneutria nigriventer (Brazilian armed spider) protein is U24-ctenitoxin-Pn1a.